Consider the following 245-residue polypeptide: Carboxy-S-adenosyl-L-methionine synthase (245 aa).

S-adenosyl-L-methionine is bound by residues Tyr39, 64 to 66, 117 to 118, and Arg199; these read GSS and DI.

It belongs to the class I-like SAM-binding methyltransferase superfamily. Cx-SAM synthase family. Homodimer.

The catalysed reaction is prephenate + S-adenosyl-L-methionine = carboxy-S-adenosyl-L-methionine + 3-phenylpyruvate + H2O. Catalyzes the conversion of S-adenosyl-L-methionine (SAM) to carboxy-S-adenosyl-L-methionine (Cx-SAM). The chain is Carboxy-S-adenosyl-L-methionine synthase from Desulfotalea psychrophila (strain LSv54 / DSM 12343).